The chain runs to 682 residues: Glucan endo-1,3-beta-glucosidase A1 (682 aa).

The first 38 residues, 1–38 (MKPSHFTEKRFMKKVLGLFLVVVMLASVGVLPTSKVQA), serve as a signal peptide directing secretion. The GH16 domain occupies 391–682 (YTFIGNPNAP…VDYVRVYKEQ (292 aa)). Residue Glu-552 is the Nucleophile of the active site. The active-site Proton donor is Glu-557.

This sequence belongs to the glycosyl hydrolase 16 family.

Its subcellular location is the secreted. The enzyme catalyses Hydrolysis of (1-&gt;3)-beta-D-glucosidic linkages in (1-&gt;3)-beta-D-glucans.. In terms of biological role, lysis of cellular walls containing beta-1,3-glucans. Implicated in the defense against fungal pathogens. The chain is Glucan endo-1,3-beta-glucosidase A1 (glcA) from Niallia circulans (Bacillus circulans).